We begin with the raw amino-acid sequence, 365 residues long: S-adenosylmethionine:tRNA ribosyltransferase-isomerase (365 aa).

It belongs to the QueA family. In terms of assembly, monomer.

The protein resides in the cytoplasm. The enzyme catalyses 7-aminomethyl-7-carbaguanosine(34) in tRNA + S-adenosyl-L-methionine = epoxyqueuosine(34) in tRNA + adenine + L-methionine + 2 H(+). The protein operates within tRNA modification; tRNA-queuosine biosynthesis. Transfers and isomerizes the ribose moiety from AdoMet to the 7-aminomethyl group of 7-deazaguanine (preQ1-tRNA) to give epoxyqueuosine (oQ-tRNA). The protein is S-adenosylmethionine:tRNA ribosyltransferase-isomerase of Rickettsia peacockii (strain Rustic).